Consider the following 621-residue polypeptide: 1-deoxy-D-xylulose-5-phosphate synthase (621 aa).

Residues His80 and 121–123 (GHS) contribute to the thiamine diphosphate site. Asp152 lines the Mg(2+) pocket. Thiamine diphosphate contacts are provided by residues 153–154 (GA), Asn181, Tyr288, and Glu370. Asn181 contacts Mg(2+).

Belongs to the transketolase family. DXPS subfamily. In terms of assembly, homodimer. The cofactor is Mg(2+). It depends on thiamine diphosphate as a cofactor.

The catalysed reaction is D-glyceraldehyde 3-phosphate + pyruvate + H(+) = 1-deoxy-D-xylulose 5-phosphate + CO2. It functions in the pathway metabolic intermediate biosynthesis; 1-deoxy-D-xylulose 5-phosphate biosynthesis; 1-deoxy-D-xylulose 5-phosphate from D-glyceraldehyde 3-phosphate and pyruvate: step 1/1. Catalyzes the acyloin condensation reaction between C atoms 2 and 3 of pyruvate and glyceraldehyde 3-phosphate to yield 1-deoxy-D-xylulose-5-phosphate (DXP). This chain is 1-deoxy-D-xylulose-5-phosphate synthase, found in Aeromonas hydrophila subsp. hydrophila (strain ATCC 7966 / DSM 30187 / BCRC 13018 / CCUG 14551 / JCM 1027 / KCTC 2358 / NCIMB 9240 / NCTC 8049).